The sequence spans 529 residues: DEP domain-containing protein 1B (529 aa).

Residues 24–108 (FRARMPLRRH…DNRHLYRFPP (85 aa)) form the DEP domain. A Phosphoserine modification is found at Ser-160. One can recognise a Rho-GAP domain in the interval 201 to 393 (DSLEEVLNTK…FLMDNYQEIL (193 aa)). Ser-436 is modified (phosphoserine).

The protein is DEP domain-containing protein 1B (Depdc1b) of Mus musculus (Mouse).